We begin with the raw amino-acid sequence, 475 residues long: Transmembrane protein 44 (475 aa).

At 1–29 the chain is on the extracellular side; the sequence is MGEAPSPAPALWDWDYLDRCFARHRVCIS. The helical transmembrane segment at 30-50 threads the bilayer; that stretch reads FGLWICASSCWIAAHALLLYL. Residues 51-61 are Cytoplasmic-facing; it reads RCAQKPRQDQS. Residues 62-82 traverse the membrane as a helical segment; the sequence is ALCAACCLLTSLCDTVGALLA. Over 83-88 the chain is Extracellular; it reads RQLTIQ. Residues 89-109 traverse the membrane as a helical segment; it reads VFTGAYLAAIDLVNFMFILFP. The Cytoplasmic segment spans residues 110 to 135; the sequence is VCGSKFKSNSDREARERKRRRQLRAS. The chain crosses the membrane as a helical span at residues 136-156; that stretch reads VFALALPLSLGPCWALWVAVP. Residues 157 to 179 are Extracellular-facing; the sequence is KASATIRGPQRRLLASLLQENTE. The chain crosses the membrane as a helical span at residues 180–200; the sequence is ILGYLLGSVAAFGSWASRIPP. The Cytoplasmic portion of the chain corresponds to 201–259; sequence LSRIAPPPTLGITTQHEIWRGQMSKPSQSPSRSPSGHWRAAAQRQVLGTEMCRGKTFPS. Residues 260–280 traverse the membrane as a helical segment; that stretch reads IHLWTRLLSALAGLLYASAIV. The Extracellular segment spans residues 281–294; sequence AHDQHPEYLLRATP. Residues 295-315 form a helical membrane-spanning segment; sequence WFLTSLGRAALDLAIIFLSCV. The Cytoplasmic portion of the chain corresponds to 316–475; it reads MKSKMRQALG…VRTAHLSDDD (160 aa). Residues 390-475 form a disordered region; sequence SATRLPGDGQ…VRTAHLSDDD (86 aa). A compositionally biased stretch (low complexity) spans 424 to 436; that stretch reads SSGSSSEVSSINS. The span at 464–475 shows a compositional bias: basic and acidic residues; the sequence is DSVRTAHLSDDD. Residue Ser-465 is modified to Phosphoserine.

It localises to the membrane. This chain is Transmembrane protein 44 (TMEM44), found in Homo sapiens (Human).